A 311-amino-acid chain; its full sequence is Olfactory receptor 52J3 (311 aa).

At 1 to 27 (MFYHNKSIFHPVTFFLIGIPGLEDFHM) the chain is on the extracellular side. Residue Asn5 is glycosylated (N-linked (GlcNAc...) asparagine). The helical transmembrane segment at 28-48 (WISGPFCSVYLVALLGNATIL) threads the bilayer. The Cytoplasmic segment spans residues 49-56 (LVIKVEQT). The helical transmembrane segment at 57 to 77 (LREPMFYFLAILSTIDLALST) threads the bilayer. The Extracellular portion of the chain corresponds to 78-101 (TSVPRMLGIFWFDAHEINYGACVA). Cysteines 99 and 191 form a disulfide. A helical membrane pass occupies residues 102–122 (QMFLIHAFTGMEAEVLLAMAF). At 123 to 141 (DRYVAVCAPLHYATILTSQ) the chain is on the cytoplasmic side. Residues 142 to 162 (VLVGISMCIVIRPVLLTLPMV) traverse the membrane as a helical segment. Residues 163 to 198 (YLIYRLPFCQAHIIAHSYCEHMGIAKLSCGNIRING) lie on the Extracellular side of the membrane. The chain crosses the membrane as a helical span at residues 199 to 218 (IYGLFVVSFFVLNLVLIGIS). Residues 219–238 (YVYILRAVFRLPSHDAQLKA) lie on the Cytoplasmic side of the membrane. Residues 239–259 (LSTCGAHVGVICVFYIPSVFS) traverse the membrane as a helical segment. The Extracellular portion of the chain corresponds to 260 to 274 (FLTHRFGHQIPGYIH). Residues 275–295 (ILVANLYLIIPPSLNPIIYGV) traverse the membrane as a helical segment. Over 296 to 311 (RTKQIRERVLYVFTKK) the chain is Cytoplasmic.

This sequence belongs to the G-protein coupled receptor 1 family.

It is found in the cell membrane. Functionally, odorant receptor. The protein is Olfactory receptor 52J3 (OR52J3) of Homo sapiens (Human).